A 326-amino-acid polypeptide reads, in one-letter code: Ribose operon repressor (326 aa).

The 56-residue stretch at 1 to 56 (MATIKDVAGAAGVSVATVSRNLNDNGYVHEETRTRVIAAMAKLNYYPNEVARSLYK) folds into the HTH lacI-type domain. A DNA-binding region (H-T-H motif) is located at residues 4–23 (IKDVAGAAGVSVATVSRNLN).

Functionally, transcriptional repressor for the ribose rbsDACBK operon. This is Ribose operon repressor (rbsR) from Bacillus subtilis (strain 168).